The primary structure comprises 271 residues: Zinc finger CCHC domain-containing protein 9 (271 aa).

The interval 1-67 (MTRWARVTTS…RKKNKKKKEY (67 aa)) is disordered. Over residues 7–20 (VTTSNSKRPLSATS) the composition is skewed to polar residues. Residues 22 to 33 (EDMKKGSVERAD) show a composition bias toward basic and acidic residues. The segment covering 35–46 (SLPNRKQCQSSR) has biased composition (polar residues). The segment covering 56–65 (AKRKKNKKKK) has biased composition (basic residues). 4 consecutive CCHC-type zinc fingers follow at residues 128 to 145 (MVCF…DCPA), 155 to 172 (GICY…KCRA), 184 to 201 (AKCF…SCPD), and 211 to 228 (GSCK…DCRE).

As to expression, detected in brain cortex and in testis.

The protein resides in the nucleus. Its subcellular location is the nucleolus. In terms of biological role, may down-regulate transcription mediated by NF-kappa-B and the serum response element. The protein is Zinc finger CCHC domain-containing protein 9 (Zcchc9) of Mus musculus (Mouse).